We begin with the raw amino-acid sequence, 77 residues long: Sec-independent protein translocase protein TatA (77 aa).

Residues 1–21 (MGGISIWQLLIIALIVVLLFG) form a helical membrane-spanning segment. 2 stretches are compositionally biased toward basic and acidic residues: residues 47–56 (EKKALEDKEA) and 65–77 (TEKK…KEQA). The interval 47–77 (EKKALEDKEAAAQTTQQATEKKPEADKKEQA) is disordered.

This sequence belongs to the TatA/E family. In terms of assembly, the Tat system comprises two distinct complexes: a TatABC complex, containing multiple copies of TatA, TatB and TatC subunits, and a separate TatA complex, containing only TatA subunits. Substrates initially bind to the TatABC complex, which probably triggers association of the separate TatA complex to form the active translocon.

It localises to the cell inner membrane. Functionally, part of the twin-arginine translocation (Tat) system that transports large folded proteins containing a characteristic twin-arginine motif in their signal peptide across membranes. TatA could form the protein-conducting channel of the Tat system. This chain is Sec-independent protein translocase protein TatA, found in Shewanella amazonensis (strain ATCC BAA-1098 / SB2B).